The primary structure comprises 253 residues: Imidazole glycerol phosphate synthase subunit HisF (253 aa).

Active-site residues include aspartate 11 and aspartate 130.

Belongs to the HisA/HisF family. As to quaternary structure, heterodimer of HisH and HisF.

The protein localises to the cytoplasm. It carries out the reaction 5-[(5-phospho-1-deoxy-D-ribulos-1-ylimino)methylamino]-1-(5-phospho-beta-D-ribosyl)imidazole-4-carboxamide + L-glutamine = D-erythro-1-(imidazol-4-yl)glycerol 3-phosphate + 5-amino-1-(5-phospho-beta-D-ribosyl)imidazole-4-carboxamide + L-glutamate + H(+). The protein operates within amino-acid biosynthesis; L-histidine biosynthesis; L-histidine from 5-phospho-alpha-D-ribose 1-diphosphate: step 5/9. In terms of biological role, IGPS catalyzes the conversion of PRFAR and glutamine to IGP, AICAR and glutamate. The HisF subunit catalyzes the cyclization activity that produces IGP and AICAR from PRFAR using the ammonia provided by the HisH subunit. In Ruegeria sp. (strain TM1040) (Silicibacter sp.), this protein is Imidazole glycerol phosphate synthase subunit HisF.